The sequence spans 91 residues: MAMNLPADNEGKIKLAMSILVTIINDTGVPRNIRRAAANALTHLRDPRLSPAVRAANAISALEEVSQDPNMPFYARTRIWQVITILETVRD.

Belongs to the UPF0147 family.

This chain is UPF0147 protein APE_2336a, found in Aeropyrum pernix (strain ATCC 700893 / DSM 11879 / JCM 9820 / NBRC 100138 / K1).